Here is a 128-residue protein sequence, read N- to C-terminus: uncharacterized protein (128 aa).

An intrachain disulfide couples Cys10 to Cys13.

Belongs to the ArsC family.

This is an uncharacterized protein from Ureaplasma parvum serovar 3 (strain ATCC 700970).